A 342-amino-acid polypeptide reads, in one-letter code: S-adenosylmethionine:tRNA ribosyltransferase-isomerase (342 aa).

This sequence belongs to the QueA family. As to quaternary structure, monomer.

It is found in the cytoplasm. It catalyses the reaction 7-aminomethyl-7-carbaguanosine(34) in tRNA + S-adenosyl-L-methionine = epoxyqueuosine(34) in tRNA + adenine + L-methionine + 2 H(+). It functions in the pathway tRNA modification; tRNA-queuosine biosynthesis. Its function is as follows. Transfers and isomerizes the ribose moiety from AdoMet to the 7-aminomethyl group of 7-deazaguanine (preQ1-tRNA) to give epoxyqueuosine (oQ-tRNA). This is S-adenosylmethionine:tRNA ribosyltransferase-isomerase from Campylobacter jejuni subsp. jejuni serotype O:6 (strain 81116 / NCTC 11828).